Here is a 194-residue protein sequence, read N- to C-terminus: Imidazoleglycerol-phosphate dehydratase (194 aa).

The protein belongs to the imidazoleglycerol-phosphate dehydratase family.

It localises to the cytoplasm. The catalysed reaction is D-erythro-1-(imidazol-4-yl)glycerol 3-phosphate = 3-(imidazol-4-yl)-2-oxopropyl phosphate + H2O. The protein operates within amino-acid biosynthesis; L-histidine biosynthesis; L-histidine from 5-phospho-alpha-D-ribose 1-diphosphate: step 6/9. The chain is Imidazoleglycerol-phosphate dehydratase from Thermus thermophilus (strain ATCC 27634 / DSM 579 / HB8).